The sequence spans 105 residues: NADH-quinone oxidoreductase subunit K (105 aa).

A run of 3 helical transmembrane segments spans residues 7 to 27 (IGVN…MFAV), 34 to 54 (IVIL…FLTF), and 66 to 86 (FSLF…AIVI).

This sequence belongs to the complex I subunit 4L family. As to quaternary structure, NDH-1 is composed of 14 different subunits. Subunits NuoA, H, J, K, L, M, N constitute the membrane sector of the complex.

It is found in the cell inner membrane. The enzyme catalyses a quinone + NADH + 5 H(+)(in) = a quinol + NAD(+) + 4 H(+)(out). In terms of biological role, NDH-1 shuttles electrons from NADH, via FMN and iron-sulfur (Fe-S) centers, to quinones in the respiratory chain. The immediate electron acceptor for the enzyme in this species is believed to be a menaquinone. Couples the redox reaction to proton translocation (for every two electrons transferred, four hydrogen ions are translocated across the cytoplasmic membrane), and thus conserves the redox energy in a proton gradient. The chain is NADH-quinone oxidoreductase subunit K from Chlorobaculum parvum (strain DSM 263 / NCIMB 8327) (Chlorobium vibrioforme subsp. thiosulfatophilum).